Reading from the N-terminus, the 100-residue chain is Signal recognition particle 19 kDa protein (100 aa).

Belongs to the SRP19 family. In terms of assembly, part of the signal recognition particle protein translocation system, which is composed of SRP and FtsY. Archaeal SRP consists of a 7S RNA molecule of 300 nucleotides and two protein subunits: SRP54 and SRP19.

It localises to the cytoplasm. In terms of biological role, involved in targeting and insertion of nascent membrane proteins into the cytoplasmic membrane. Binds directly to 7S RNA and mediates binding of the 54 kDa subunit of the SRP. In Pyrococcus furiosus (strain ATCC 43587 / DSM 3638 / JCM 8422 / Vc1), this protein is Signal recognition particle 19 kDa protein.